The following is a 124-amino-acid chain: Small ribosomal subunit protein uS12 (124 aa).

The tract at residues 1–24 (MPTISQLVRKGRAKITKKSKSAAL) is disordered. The segment covering 9–20 (RKGRAKITKKSK) has biased composition (basic residues). Residue Asp-89 is modified to 3-methylthioaspartic acid. The tract at residues 105-124 (AGVEGRTQRRSKYGAKRPKK) is disordered. Positions 112–124 (QRRSKYGAKRPKK) are enriched in basic residues.

This sequence belongs to the universal ribosomal protein uS12 family. Part of the 30S ribosomal subunit. Contacts proteins S8 and S17. May interact with IF1 in the 30S initiation complex.

Functionally, with S4 and S5 plays an important role in translational accuracy. Interacts with and stabilizes bases of the 16S rRNA that are involved in tRNA selection in the A site and with the mRNA backbone. Located at the interface of the 30S and 50S subunits, it traverses the body of the 30S subunit contacting proteins on the other side and probably holding the rRNA structure together. The combined cluster of proteins S8, S12 and S17 appears to hold together the shoulder and platform of the 30S subunit. The polypeptide is Small ribosomal subunit protein uS12 (Christiangramia forsetii (strain DSM 17595 / CGMCC 1.15422 / KT0803) (Gramella forsetii)).